The sequence spans 535 residues: SIR4-interacting protein SIF2 (535 aa).

Residues 4–36 (TSEELNYLIWRYCQEMGHEVSALALQDETRVLE) enclose the LisH domain. The disordered stretch occupies residues 104 to 140 (EGRFTLETNSESNKAGEDGASTVERETQEDDTNSIDS). Positions 130–140 (TQEDDTNSIDS) are enriched in acidic residues. A Phosphoserine modification is found at serine 137. WD repeat units lie at residues 155–186 (VKLD…RLAR), 218–248 (KTTN…RLWN), 259–289 (FHRA…ILWN), 316–345 (GDGS…FVYQ), 357–387 (GHHG…RIWH), 399–428 (GHSQ…RLWS), 440–470 (VDGV…NVYD), and 503–534 (SQDN…SVVA).

Homotetramer. Interacts with SIR4 N-terminal domain. Interacts with a complex composed of SIN3 and RPD3. Identified in the Set3C complex with HOS2, HST1, SNT1, CPR1, HOS4/YIL112W and SET3.

The protein localises to the nucleus. Antagonizes telomeric silencing in yeast. May recruit SIR4 to non-telomeric sites or repression. This chain is SIR4-interacting protein SIF2 (SIF2), found in Saccharomyces cerevisiae (strain ATCC 204508 / S288c) (Baker's yeast).